We begin with the raw amino-acid sequence, 400 residues long: Tryptophan 2,3-dioxygenase (400 aa).

Substrate-binding positions include 75–79 (FIIIH) and R146. H332 contributes to the heme binding site. Substrate is bound at residue T346.

This sequence belongs to the tryptophan 2,3-dioxygenase family. As to quaternary structure, homotetramer. Dimer of dimers. Requires heme as cofactor.

The catalysed reaction is L-tryptophan + O2 = N-formyl-L-kynurenine. It participates in amino-acid degradation; L-tryptophan degradation via kynurenine pathway; L-kynurenine from L-tryptophan: step 1/2. Heme-dependent dioxygenase that catalyzes the oxidative cleavage of the L-tryptophan (L-Trp) pyrrole ring and converts L-tryptophan to N-formyl-L-kynurenine. Catalyzes the oxidative cleavage of the indole moiety. This Dictyostelium discoideum (Social amoeba) protein is Tryptophan 2,3-dioxygenase.